Here is an 857-residue protein sequence, read N- to C-terminus: DNA mismatch repair protein MutS (857 aa).

613–620 is a binding site for ATP; that stretch reads GPNMGGKS. The tract at residues 797-820 is disordered; that stretch reads TSLPHEQPAAHKAKDAPQVPHQSD.

This sequence belongs to the DNA mismatch repair MutS family.

This protein is involved in the repair of mismatches in DNA. It is possible that it carries out the mismatch recognition step. This protein has a weak ATPase activity. The chain is DNA mismatch repair protein MutS from Pseudomonas putida (strain ATCC 700007 / DSM 6899 / JCM 31910 / BCRC 17059 / LMG 24140 / F1).